The chain runs to 875 residues: Alanine--tRNA ligase (875 aa).

Positions 562, 566, 665, and 669 each coordinate Zn(2+).

The protein belongs to the class-II aminoacyl-tRNA synthetase family. Requires Zn(2+) as cofactor.

It is found in the cytoplasm. The catalysed reaction is tRNA(Ala) + L-alanine + ATP = L-alanyl-tRNA(Ala) + AMP + diphosphate. Catalyzes the attachment of alanine to tRNA(Ala) in a two-step reaction: alanine is first activated by ATP to form Ala-AMP and then transferred to the acceptor end of tRNA(Ala). Also edits incorrectly charged Ser-tRNA(Ala) and Gly-tRNA(Ala) via its editing domain. This is Alanine--tRNA ligase from Saccharophagus degradans (strain 2-40 / ATCC 43961 / DSM 17024).